Here is a 622-residue protein sequence, read N- to C-terminus: Condensin-2 complex subunit H2 (622 aa).

Thr-19 is modified (phosphothreonine). Ser-95, Ser-199, Ser-223, and Ser-227 each carry phosphoserine. Residues 207–354 (WNPKEPGRAE…PGQKRKRKGA (148 aa)) are disordered. Residues 262–273 (AAEPPEASAPEV) are compositionally biased toward low complexity. Position 282 is a phosphoserine (Ser-282). A compositionally biased stretch (basic and acidic residues) spans 294-312 (TLRERKEAPEPASRLKDTP).

This sequence belongs to the CND2 H2 (condensin-2 subunit 2) family. As to quaternary structure, component of the condensin-2 complex, which contains the SMC2 and SMC4 heterodimer, and three non SMC subunits, NCAPG2, NCAPH2 and NCAPD3 that probably regulate the complex.

It is found in the nucleus. Functionally, regulatory subunit of the condensin-2 complex, a complex that seems to provide chromosomes with an additional level of organization and rigidity and in establishing mitotic chromosome architecture. May promote the resolution of double-strand DNA catenanes (intertwines) between sister chromatids. Condensin-mediated compaction likely increases tension in catenated sister chromatids, providing directionality for type II topoisomerase-mediated strand exchanges toward chromatid decatenation. Required for decatenation of chromatin bridges at anaphase. Early in neurogenesis, may play an essential role to ensure accurate mitotic chromosome condensation in neuron stem cells, ultimately affecting neuron pool and cortex size. Seems to have lineage-specific role in T-cell development. The protein is Condensin-2 complex subunit H2 (NCAPH2) of Bos taurus (Bovine).